The sequence spans 1129 residues: MSNSRKMSEPPRFFVGPEDAEINPGNYRRFFHHAEEEEEEEDESPPERQIVVGICSMAKKSKSKPMKEILERISLFKYITVVVFEEEIILNEPVENWPLCDCLISFHSKGFPLDKAVAYAKLRNPFVINDLNMQYLIQDRRDVYSILQAEGILLPRYAILNRDPNNPKECNLIEGEDHVEVNGEVFQKPFVEKPVSAEDHNVYIYYPTSAGGGSQRLFRKIGSRSSVYSPESNVRKTGSYIYEEFMPTDGTDVKVYTVGPDYAHAEARKSPALDGKVERDSEGKEVRYPVILNAREKLIAWKVCLAFKQTVCGFDLLRANGQSYVCDVNGFSFVKNSMKYYDDCAKILGNIVMRELAPQFHIPWSIPLEAEDIPIVPTTSGTMMELRCVIAVIRHGDRTPKQKMKMEVRHQKFFDLFEKCDGYKSGKLKLKKPKQLQEVLDIARQLLMELGQNNDSEIEENKSKLEQLKTVLEMYGHFSGINRKVQLTYLPHGCPKTSSEEEDNRREEPSLLLVLKWGGELTPAGRVQAEELGRAFRCMYPGGQGDYAGFPGCGLLRLHSTYRHDLKIYASDEGRVQMTAAAFAKGLLALEGELTPILVQMVKSANMNGLLDSDSDSLSSCQQRVKARLHEILQKDRDFTAEDYEKLTPSGSISVIKSMHLIKNPVKTCDKVYSLIQSLTSQIRYRMEDPKSADIQLYHSETLELMLRRWSKLEKDFKTKNGRYDISKIPDIYDCIKYDVQHNGSLKLENTMELYRLSKALADIVIPQEYGITKAEKLEIAKGYCTPLVRKIRSDLQRTQDDDTVNKLHPVYSRGVLSPERHVRTRLYFTSESHVHSLLSILRYGALCDDSKDEQWKRAMDYLNVVNELNYMTQIVIMLYEDPNKDLSSEERFHVELHFSPGAKGCEEDKNLPSGYGYRPASRENEGRRSLKTDDDEPHTSKRDEVDRAVMLFKPLVSEPIHIHRKSPLPRSRKITANEVVSENANYLRTPRNLVEQKQNPTVGFELYSMVPSICPLETLHNALFLKQVDDFLASIASPSTEVLRKVPEMSSMATRSSPGMRRKISLNTYTPTKILPTPPAALKSSKASSKAAAGGPSQAMAPHTSSRKKSINSKTEGHEPKKSTGKKR.

Phosphoserine is present on Ser44. Residue 59–60 (KK) participates in substrate binding. 4 residues coordinate ATP: Arg140, Lys193, His200, and Arg219. Position 219 to 220 (219 to 220 (RK)) interacts with substrate. Ser229 carries the phosphoserine modification. ATP is bound by residues 243 to 246 (EEFM) and 252 to 254 (DVK). Lys254 and Arg268 together coordinate substrate. ATP contacts are provided by residues Ser270, Asp315, and 327–329 (DVN). 332-335 (SFVK) contributes to the substrate binding site. A polyphosphoinositide-binding domain region spans residues 377–448 (PTTSGTMMEL…VLDIARQLLM (72 aa)). Residues 904–945 (KGCEEDKNLPSGYGYRPASRENEGRRSLKTDDDEPHTSKRDE) form a disordered region. Residues 921–945 (ASRENEGRRSLKTDDDEPHTSKRDE) are compositionally biased toward basic and acidic residues. Phosphoserine occurs at positions 1051, 1058, and 1066. The segment at 1070–1129 (YTPTKILPTPPAALKSSKASSKAAAGGPSQAMAPHTSSRKKSINSKTEGHEPKKSTGKKR) is disordered. Positions 1081–1098 (AALKSSKASSKAAAGGPS) are enriched in low complexity. 2 positions are modified to phosphoserine: Ser1106 and Ser1107.

This sequence belongs to the histidine acid phosphatase family. VIP1 subfamily. As to expression, ubiquitously expressed. Expressed in the cochlear and vestibular sensory hair cells, supporting cells and spiral ganglion neurons.

The protein resides in the cytoplasm. Its subcellular location is the cytosol. It carries out the reaction 1D-myo-inositol hexakisphosphate + ATP = 1-diphospho-1D-myo-inositol 2,3,4,5,6-pentakisphosphate + ADP. The enzyme catalyses 5-diphospho-1D-myo-inositol 1,2,3,4,6-pentakisphosphate + ATP + H(+) = 1,5-bis(diphospho)-1D-myo-inositol 2,3,4,6-tetrakisphosphate + ADP. In terms of biological role, bifunctional inositol kinase that acts in concert with the IP6K kinases IP6K1, IP6K2 and IP6K3 to synthesize the diphosphate group-containing inositol pyrophosphates diphosphoinositol pentakisphosphate, PP-InsP5, and bis-diphosphoinositol tetrakisphosphate, (PP)2-InsP4. PP-InsP5 and (PP)2-InsP4, also respectively called InsP7 and InsP8, regulate a variety of cellular processes, including apoptosis, vesicle trafficking, cytoskeletal dynamics, exocytosis, insulin signaling and neutrophil activation. Phosphorylates inositol hexakisphosphate (InsP6) at position 1 to produce PP-InsP5 which is in turn phosphorylated by IP6Ks to produce (PP)2-InsP4. Alternatively, phosphorylates PP-InsP5 at position 1, produced by IP6Ks from InsP6, to produce (PP)2-InsP4. Required for normal hearing. In Mus musculus (Mouse), this protein is Inositol hexakisphosphate and diphosphoinositol-pentakisphosphate kinase 2.